The sequence spans 328 residues: Tetraacyldisaccharide 4'-kinase (328 aa).

An ATP-binding site is contributed by 55 to 62; the sequence is TAGGNGKT.

This sequence belongs to the LpxK family.

It carries out the reaction a lipid A disaccharide + ATP = a lipid IVA + ADP + H(+). It functions in the pathway glycolipid biosynthesis; lipid IV(A) biosynthesis; lipid IV(A) from (3R)-3-hydroxytetradecanoyl-[acyl-carrier-protein] and UDP-N-acetyl-alpha-D-glucosamine: step 6/6. Transfers the gamma-phosphate of ATP to the 4'-position of a tetraacyldisaccharide 1-phosphate intermediate (termed DS-1-P) to form tetraacyldisaccharide 1,4'-bis-phosphate (lipid IVA). The sequence is that of Tetraacyldisaccharide 4'-kinase from Escherichia coli O139:H28 (strain E24377A / ETEC).